A 105-amino-acid polypeptide reads, in one-letter code: Iron-sulfur cluster assembly protein CyaY (105 aa).

It belongs to the frataxin family.

In terms of biological role, involved in iron-sulfur (Fe-S) cluster assembly. May act as a regulator of Fe-S biogenesis. This is Iron-sulfur cluster assembly protein CyaY from Paraburkholderia phymatum (strain DSM 17167 / CIP 108236 / LMG 21445 / STM815) (Burkholderia phymatum).